We begin with the raw amino-acid sequence, 184 residues long: 3-hydroxyanthranilate 3,4-dioxygenase (184 aa).

Position 44 (Arg-44) interacts with O2. The Fe cation site is built by His-48, Glu-54, and His-92. Position 54 (Glu-54) interacts with substrate. The substrate site is built by Arg-96 and Glu-106. Residues Cys-121, Cys-126, Cys-162, and Cys-165 each contribute to the a divalent metal cation site.

Belongs to the 3-HAO family. Requires Fe(2+) as cofactor.

It is found in the cytoplasm. It carries out the reaction 3-hydroxyanthranilate + O2 = (2Z,4Z)-2-amino-3-carboxymuconate 6-semialdehyde. It participates in cofactor biosynthesis; NAD(+) biosynthesis; quinolinate from L-kynurenine: step 3/3. Its function is as follows. Catalyzes the oxidative ring opening of 3-hydroxyanthranilate to 2-amino-3-carboxymuconate semialdehyde, which spontaneously cyclizes to quinolinate. This is 3-hydroxyanthranilate 3,4-dioxygenase from Pyricularia oryzae (strain 70-15 / ATCC MYA-4617 / FGSC 8958) (Rice blast fungus).